The following is a 173-amino-acid chain: Alpha-crystallin A chain (173 aa).

Methionine 1 is modified (N-acetylmethionine). A required for complex formation with BFSP1 and BFSP2 region spans residues 1–63 (MDVTIQHPWF…RTVLDSGISE (63 aa)). Residue glutamine 6 is modified to Deamidated glutamine; partial. Residue serine 45 is modified to Phosphoserine. A deamidated glutamine; partial mark is found at glutamine 50 and glutamine 90. In terms of domain architecture, sHSP spans 52–162 (LFRTVLDSGI…SHSERAIPVS (111 aa)). At lysine 99 the chain carries N6-acetyllysine. Histidine 100 is a binding site for Zn(2+). Residue asparagine 101 is modified to Deamidated asparagine; partial. Zn(2+) is bound by residues glutamate 102 and histidine 107. Position 122 is a phosphoserine (serine 122). Residue asparagine 123 is modified to Deamidated asparagine; partial. Residues cysteine 131 and cysteine 142 are joined by a disulfide bond. A Deamidated glutamine; partial modification is found at glutamine 147. Residues 149–173 (GMDASHSERAIPVSREEKPSSAPSS) form a disordered region. Over residues 153–167 (SHSERAIPVSREEKP) the composition is skewed to basic and acidic residues. Histidine 154 contributes to the Zn(2+) binding site. A glycan (O-linked (GlcNAc) serine) is linked at serine 162.

It belongs to the small heat shock protein (HSP20) family. Heteromer composed of three CRYAA and one CRYAB subunits. Inter-subunit bridging via zinc ions enhances stability, which is crucial as there is no protein turn over in the lens. Can also form homodimers and homotetramers (dimers of dimers) which serve as the building blocks of homooligomers. Within homooligomers, the zinc-binding motif is created from residues of 3 different molecules. His-100 and Glu-102 from one molecule are ligands of the zinc ion, and His-107 and His-154 residues from additional molecules complete the site with tetrahedral coordination geometry. Part of a complex required for lens intermediate filament formation composed of BFSP1, BFSP2 and CRYAA. In terms of processing, undergoes age-dependent proteolytical cleavage at the C-terminus.

It localises to the cytoplasm. Its subcellular location is the nucleus. Its function is as follows. Contributes to the transparency and refractive index of the lens. In its oxidized form (absence of intramolecular disulfide bond), acts as a chaperone, preventing aggregation of various proteins under a wide range of stress conditions. Required for the correct formation of lens intermediate filaments as part of a complex composed of BFSP1, BFSP2 and CRYAA. The chain is Alpha-crystallin A chain (CRYAA) from Loxodonta africana (African elephant).